The sequence spans 184 residues: dCTP deaminase (184 aa).

Residue 107-112 (KSTYAR) participates in dCTP binding. E133 acts as the Proton donor/acceptor in catalysis. The dCTP site is built by Q152, Y166, and Q176.

This sequence belongs to the dCTP deaminase family. Homotrimer.

It catalyses the reaction dCTP + H2O + H(+) = dUTP + NH4(+). It participates in pyrimidine metabolism; dUMP biosynthesis; dUMP from dCTP (dUTP route): step 1/2. Its function is as follows. Catalyzes the deamination of dCTP to dUTP. This chain is dCTP deaminase, found in Herpetosiphon aurantiacus (strain ATCC 23779 / DSM 785 / 114-95).